Reading from the N-terminus, the 550-residue chain is Chaperonin GroEL (550 aa).

Residues 29–32 (TAGP), Lys50, 86–90 (DGTTT), Gly418, and Asp499 contribute to the ATP site.

Belongs to the chaperonin (HSP60) family. In terms of assembly, forms a cylinder of 14 subunits composed of two heptameric rings stacked back-to-back. Interacts with the co-chaperonin GroES.

The protein resides in the cytoplasm. The catalysed reaction is ATP + H2O + a folded polypeptide = ADP + phosphate + an unfolded polypeptide.. Its function is as follows. Together with its co-chaperonin GroES, plays an essential role in assisting protein folding. The GroEL-GroES system forms a nano-cage that allows encapsulation of the non-native substrate proteins and provides a physical environment optimized to promote and accelerate protein folding. In Wolbachia sp. subsp. Brugia malayi (strain TRS), this protein is Chaperonin GroEL.